The sequence spans 157 residues: MGVIEFLFALAQDMILAAIPAVGFAMVFNVPVRALRWCALLGAIGHGSRMILMTRGLNIEWSTFMASMLVGTIGIQWSRWYLAHPKVFTVAAVIPMFPGISAYTAMISAVKISQLGYSEPLMITLLTNFLTASSIVGALSIGLSIPGLWLYRKRPRV.

The next 4 membrane-spanning stretches (helical) occupy residues 8-28, 57-77, 87-107, and 129-149; these read FALAQDMILAAIPAVGFAMVF, LNIEWSTFMASMLVGTIGIQW, VFTVAAVIPMFPGISAYTAMI, and FLTASSIVGALSIGLSIPGLW.

Belongs to the ThrE exporter (TC 2.A.79) family. As to quaternary structure, the transporter is composed of YjjB and YjjP.

The protein localises to the cell inner membrane. Involved in succinate export with YjjP. Both proteins are required for export. This chain is Probable succinate transporter subunit YjjB, found in Shigella boydii serotype 4 (strain Sb227).